A 166-amino-acid chain; its full sequence is Small ribosomal subunit protein bS6 (166 aa).

Composition is skewed to basic and acidic residues over residues 96–142 (HEEG…DRPP) and 149–166 (GGDR…GGAE). A disordered region spans residues 96-166 (HEEGPSAMMQ…PREGFEGGAE (71 aa)).

This sequence belongs to the bacterial ribosomal protein bS6 family.

In terms of biological role, binds together with bS18 to 16S ribosomal RNA. This is Small ribosomal subunit protein bS6 from Mesorhizobium japonicum (strain LMG 29417 / CECT 9101 / MAFF 303099) (Mesorhizobium loti (strain MAFF 303099)).